The chain runs to 621 residues: tRNA 5-methylaminomethyl-2-thiouridine biosynthesis bifunctional protein MnmC (621 aa).

Residues 1–222 (MKNANLSFKG…KRQMSSAVLE (222 aa)) are tRNA (mnm(5)s(2)U34)-methyltransferase. The interval 250–621 (IGTGVAGLAT…LIRKLKKGLK (372 aa)) is FAD-dependent cmnm(5)s(2)U34 oxidoreductase.

The protein in the N-terminal section; belongs to the methyltransferase superfamily. tRNA (mnm(5)s(2)U34)-methyltransferase family. In the C-terminal section; belongs to the DAO family. The cofactor is FAD.

Its subcellular location is the cytoplasm. It catalyses the reaction 5-aminomethyl-2-thiouridine(34) in tRNA + S-adenosyl-L-methionine = 5-methylaminomethyl-2-thiouridine(34) in tRNA + S-adenosyl-L-homocysteine + H(+). Functionally, catalyzes the last two steps in the biosynthesis of 5-methylaminomethyl-2-thiouridine (mnm(5)s(2)U) at the wobble position (U34) in tRNA. Catalyzes the FAD-dependent demodification of cmnm(5)s(2)U34 to nm(5)s(2)U34, followed by the transfer of a methyl group from S-adenosyl-L-methionine to nm(5)s(2)U34, to form mnm(5)s(2)U34. In Campylobacter concisus (strain 13826), this protein is tRNA 5-methylaminomethyl-2-thiouridine biosynthesis bifunctional protein MnmC.